The chain runs to 626 residues: Chaperone protein HtpG (626 aa).

Positions 1 to 331 (MSETVERHEF…TDDLPLNVSR (331 aa)) are a; substrate-binding. Residues 332-544 (EMLQSTPTLQ…GMGPDLQMQR (213 aa)) are b. A c region spans residues 545-626 (LLRRAGRGFG…GTAAKPAGSA (82 aa)).

The protein belongs to the heat shock protein 90 family. Homodimer.

It is found in the cytoplasm. In terms of biological role, molecular chaperone. Has ATPase activity. In Methylorubrum extorquens (strain CM4 / NCIMB 13688) (Methylobacterium extorquens), this protein is Chaperone protein HtpG.